We begin with the raw amino-acid sequence, 488 residues long: Teichuronic acid biosynthesis protein TuaE (488 aa).

Transmembrane regions (helical) follow at residues 7–29 (AVHT…GAIH), 35–57 (MQMA…ATAF), 64–86 (FMAV…AIHL), 91–110 (LFLY…FGMV), 122–144 (LQVK…SLLW), 154–173 (YLAL…MYVQ), 180–202 (IVYA…NHIT), 222–244 (PTSV…FFYI), 257–274 (AIGL…FATG), 279–298 (LLGI…PPVL), 303–322 (IWLS…SKIY), 354–376 (NAWH…SYYL), 397–419 (ILAN…LIWV), and 459–476 (LFFH…VNVL).

Its subcellular location is the cell membrane. Its pathway is cell wall biogenesis; teichuronic acid biosynthesis. Functionally, might be involved in the polymerization of teichuronic acid repeating units after their translocation to the outer surface of the membrane. This chain is Teichuronic acid biosynthesis protein TuaE (tuaE), found in Bacillus subtilis (strain 168).